Consider the following 736-residue polypeptide: Factor of DNA methylation 4 (736 aa).

2 stretches are compositionally biased toward basic and acidic residues: residues 80–90 and 144–167; these read RKYLRPRERPR and DSGR…SNED. A disordered region spans residues 80–167; sequence RKYLRPRERP…KPDPFFSNED (88 aa). Residues 360–597 are a coiled coil; sequence TLVSNLENTL…RSMRELTTRA (238 aa).

Functionally, acts in association with FDM3 and FDM5 for RNA-directed DNA methylation (RdDM). The polypeptide is Factor of DNA methylation 4 (Arabidopsis thaliana (Mouse-ear cress)).